The primary structure comprises 389 residues: Leucine aminopeptidase 1 (389 aa).

The first 18 residues, 1–18 (MKSSVLLSLCTAALVAGA), serve as a signal peptide directing secretion. Positions 19-89 (AHPLEPQVVL…INANRLIEKS (71 aa)) are excised as a propeptide. 3 N-linked (GlcNAc...) asparagine glycosylation sites follow: Asn99, Asn156, and Asn180. His188, Asp207, Glu246, and Asp273 together coordinate Zn(2+). Cys322 and Cys326 are joined by a disulfide. His355 lines the Zn(2+) pocket.

This sequence belongs to the peptidase M28 family. M28E subfamily. In terms of assembly, monomer. It depends on Zn(2+) as a cofactor.

It is found in the secreted. Extracellular aminopeptidase that allows assimilation of proteinaceous substrates. The polypeptide is Leucine aminopeptidase 1 (LAP1) (Phaeosphaeria nodorum (strain SN15 / ATCC MYA-4574 / FGSC 10173) (Glume blotch fungus)).